A 183-amino-acid chain; its full sequence is UPF0200 protein MmarC6_1392 (183 aa).

Residue 8–15 coordinates ATP; it reads GMPGSGKS.

Belongs to the UPF0200 family.

This is UPF0200 protein MmarC6_1392 from Methanococcus maripaludis (strain C6 / ATCC BAA-1332).